The primary structure comprises 1450 residues: Collagen alpha-1(I) chain (1450 aa).

The first 22 residues, 1-22 (MFSFVDNRLLVLLAACVLLVRA), serve as a signal peptide directing secretion. Residues 23-148 (LDQEDIESGL…PPGLGGNFAP (126 aa)) constitute a propeptide, N-terminal propeptide. The VWFC domain maps to 31 to 90 (GLCHQEGTTYSDKDVWKPEPCVICVCDNGNIMCDDVTCGDYPVDCPNAEIPFGECCPVCP). Residues 97-1201 (YSEQTGVEGP…EPKSHGDGRY (1105 aa)) are disordered. Over residues 106 to 116 (PKGEVGPKGDR) the composition is skewed to basic and acidic residues. Residues 130–140 (LPGPPGPPGPP) show a composition bias toward pro residues. A Pyrrolidone carboxylic acid modification is found at glutamine 149. Residue lysine 157 is modified to Allysine. The span at 166-181 (PMGPMGPRGPPGPSGS) shows a compositional bias: pro residues. Residues proline 176, proline 182, proline 194, proline 197, proline 212, proline 227, proline 242, and proline 248 each carry the 4-hydroxyproline modification. Low complexity predominate over residues 182 to 206 (PGPQGFQGPSGEPGEPGAAGALGPR). A compositionally biased stretch (basic and acidic residues) spans 215-229 (NGDDGESGKPGRPGE). The residue at position 251 (lysine 251) is a 5-hydroxylysine; alternate. Residue lysine 251 is glycosylated (O-linked (Gal...) hydroxylysine; alternate). The span at 266–292 (NGPAGPKGEPGNPGENGAPGQAGPRGL) shows a compositional bias: low complexity. 4-hydroxyproline occurs at positions 275, 278, 284, 293, 299, 314, 320, 329, 332, 359, 362, 374, 380, 389, 395, 398, and 413. A compositionally biased stretch (pro residues) spans 317–331 (AGPPGPTGPTGPPGF). Residues 352–374 (PQGARGEPGAPGPAGAAGPSGNP) show a composition bias toward low complexity. A compositionally biased stretch (gly residues) spans 378–387 (GQPGGKGATG). Residues 388-443 (SPGIAGAPGFPGARGAPGPQGPAGAPGPKGNNGEPGAQGNKGEPGAKGEPGPAGVQ) are compositionally biased toward low complexity. The residue at position 416 (lysine 416) is a 5-hydroxylysine. 4-hydroxyproline is present on residues proline 422, proline 437, proline 446, proline 461, proline 467, proline 476, and proline 482. Residues 471 to 480 (GERGGPGSRG) show a composition bias toward gly residues. Lysine 491 carries the 5-hydroxylysine modification. 4-hydroxyproline occurs at positions 494, 515, 521, 530, 533, 551, 569, 578, 590, 608, 626, 632, 644, 650, 656, and 668. Low complexity-rich tracts occupy residues 568-578 (FPGPKGAAGEP) and 586-596 (VAGPPGATGAP). A compositionally biased stretch (low complexity) spans 637–650 (PAGEAGKPGEQGAP). Positions 669 to 678 (GERGGQGPAG) are enriched in gly residues. The span at 679 to 701 (AQGPRGSPGSPGNDGAKGEAGAA) shows a compositional bias: low complexity. A 4-hydroxyproline mark is found at proline 689, proline 704, proline 710, proline 716, and proline 725. Gly residues predominate over residues 702 to 711 (GAPGGRGPPG). Lysine 737 carries the post-translational modification 5-hydroxylysine. 4-hydroxyproline occurs at positions 743, 758, 764, 785, 791, 794, 803, 809, 827, 836, and 845. Positions 796 to 806 (PAGICGPPGAD) are enriched in low complexity. Over residues 817–869 (DAGPKGDAGAPGPAGPTGAPGPAGNVGAPGPKGTRGAAGPPGATGFPGAAGRL) the composition is skewed to low complexity. Residue lysine 848 is modified to 5-hydroxylysine. 2 positions are modified to 4-hydroxyproline: proline 857 and proline 863. Residue proline 871 is modified to 3-hydroxyproline. A 4-hydroxyproline mark is found at proline 872, proline 881, proline 884, proline 908, proline 914, proline 923, proline 932, proline 950, proline 962, proline 968, proline 983, proline 989, proline 995, proline 1004, and proline 1010. Residues 917–943 (SGEKGSPGSDGPAGAPGIPGPQGIAGQ) are compositionally biased toward low complexity. Over residues 982–997 (PPGPSGPPGLGGPPGE) the composition is skewed to pro residues. At lysine 1019 the chain carries 5-hydroxylysine. Over residues 1028–1043 (SGPPGAPGAPGAPGPV) the composition is skewed to pro residues. Residues proline 1031, proline 1034, and proline 1037 each carry the 4-hydroxyproline modification. A compositionally biased stretch (low complexity) spans 1064-1078 (AGPSGVRGAPGPAGA). Positions 1079–1093 (RGDKGEAGEQGERGM) are enriched in basic and acidic residues. Lysine 1082 is modified (5-hydroxylysine). At lysine 1094 the chain carries 5-hydroxylysine; alternate. Lysine 1094 is a glycosylation site (O-linked (Gal...) hydroxylysine; alternate). 4-hydroxyproline is present on residues proline 1106 and proline 1109. Residues 1120–1129 (PSGPAGPRGP) are compositionally biased toward pro residues. 4-hydroxyproline occurs at positions 1130 and 1145. The span at 1130-1145 (PGSSGSTGKDGVNGLP) shows a compositional bias: low complexity. Residue proline 1150 is modified to 3-hydroxyproline. 4-hydroxyproline is present on proline 1151. The span at 1163-1178 (AGPPGPPGPPGPPGPP) shows a compositional bias: pro residues. Proline 1165 bears the 3-hydroxyproline mark. Proline 1166 bears the 4-hydroxyproline mark. The residue at position 1168 (proline 1168) is a 3-hydroxyproline. 4-hydroxyproline is present on proline 1169. Residue proline 1171 is modified to 3-hydroxyproline. A 4-hydroxyproline mark is found at proline 1172, proline 1175, and proline 1178. At lysine 1194 the chain carries Allysine. Positions 1205 to 1450 (DDANVVRDRD…GIDIGPVCFL (246 aa)) are cleaved as a propeptide — C-terminal propeptide. The Fibrillar collagen NC1 domain occupies 1215-1450 (LEVDTTLKSL…GIDIGPVCFL (236 aa)). Disulfide bonds link cysteine 1245/cysteine 1277, cysteine 1285/cysteine 1448, and cysteine 1356/cysteine 1401. Positions 1263, 1265, 1266, 1268, and 1271 each coordinate Ca(2+). A glycan (N-linked (GlcNAc...) asparagine) is linked at asparagine 1351.

Belongs to the fibrillar collagen family. Trimers of one alpha 2(I) and two alpha 1(I) chains. In terms of processing, contains mostly 4-hydroxyproline. Proline residues at the third position of the tripeptide repeating unit (G-X-Y) are hydroxylated in some or all of the chains. Post-translationally, contains 3-hydroxyproline at a few sites. This modification occurs on the first proline residue in the sequence motif Gly-Pro-Hyp, where Hyp is 4-hydroxyproline. Lysine residues at the third position of the tripeptide repeating unit (G-X-Y) are 5-hydroxylated in some or all of the chains. In terms of processing, O-glycosylated on hydroxylated lysine residues. The O-linked glycan consists of a Glc-Gal disaccharide.

The protein localises to the secreted. It localises to the extracellular space. The protein resides in the extracellular matrix. Functionally, type I collagen is a member of group I collagen (fibrillar forming collagen). This Cynops pyrrhogaster (Japanese fire-bellied newt) protein is Collagen alpha-1(I) chain (COL1A1).